A 428-amino-acid polypeptide reads, in one-letter code: 3-phosphoshikimate 1-carboxyvinyltransferase (428 aa).

3-phosphoshikimate-binding residues include Lys22, Ser23, and Arg27. Lys22 lines the phosphoenolpyruvate pocket. Positions 96 and 124 each coordinate phosphoenolpyruvate. Residues Ser171, Ser172, Gln173, Ser198, Asp311, and Lys338 each coordinate 3-phosphoshikimate. Gln173 is a binding site for phosphoenolpyruvate. Asp311 serves as the catalytic Proton acceptor. Phosphoenolpyruvate-binding residues include Arg342 and Arg383.

The protein belongs to the EPSP synthase family. In terms of assembly, monomer.

The protein localises to the cytoplasm. It catalyses the reaction 3-phosphoshikimate + phosphoenolpyruvate = 5-O-(1-carboxyvinyl)-3-phosphoshikimate + phosphate. It functions in the pathway metabolic intermediate biosynthesis; chorismate biosynthesis. Functionally, catalyzes the transfer of the enolpyruvyl moiety of phosphoenolpyruvate (PEP) to the 5-hydroxyl of shikimate-3-phosphate (S3P) to produce enolpyruvyl shikimate-3-phosphate and inorganic phosphate. This is 3-phosphoshikimate 1-carboxyvinyltransferase from Methanopyrus kandleri (strain AV19 / DSM 6324 / JCM 9639 / NBRC 100938).